A 249-amino-acid polypeptide reads, in one-letter code: Putative adhesin RC1281 (249 aa).

Positions 1-22 are cleaved as a signal peptide; sequence MKKLLLIAAASTALLTSGLSFA.

Adheres to biotinylated epithelial (Vero cell) proteins. The polypeptide is Putative adhesin RC1281 (Rickettsia conorii (strain ATCC VR-613 / Malish 7)).